The primary structure comprises 118 residues: Large ribosomal subunit protein bL19 (118 aa).

It belongs to the bacterial ribosomal protein bL19 family.

Its function is as follows. This protein is located at the 30S-50S ribosomal subunit interface and may play a role in the structure and function of the aminoacyl-tRNA binding site. The protein is Large ribosomal subunit protein bL19 of Campylobacter hominis (strain ATCC BAA-381 / DSM 21671 / CCUG 45161 / LMG 19568 / NCTC 13146 / CH001A).